The primary structure comprises 103 residues: Large ribosomal subunit protein bL21 (103 aa).

It belongs to the bacterial ribosomal protein bL21 family. Part of the 50S ribosomal subunit. Contacts protein L20.

Functionally, this protein binds to 23S rRNA in the presence of protein L20. The chain is Large ribosomal subunit protein bL21 from Salmonella schwarzengrund (strain CVM19633).